A 114-amino-acid chain; its full sequence is Probable divalent-cation tolerance protein cutA homolog (114 aa).

It belongs to the CutA family. Homotrimer.

The sequence is that of Probable divalent-cation tolerance protein cutA homolog from Encephalitozoon cuniculi (strain GB-M1) (Microsporidian parasite).